The primary structure comprises 426 residues: Glutamate-1-semialdehyde 2,1-aminomutase (426 aa).

K265 is modified (N6-(pyridoxal phosphate)lysine).

This sequence belongs to the class-III pyridoxal-phosphate-dependent aminotransferase family. HemL subfamily. As to quaternary structure, homodimer. The cofactor is pyridoxal 5'-phosphate.

It is found in the cytoplasm. The catalysed reaction is (S)-4-amino-5-oxopentanoate = 5-aminolevulinate. The protein operates within porphyrin-containing compound metabolism; protoporphyrin-IX biosynthesis; 5-aminolevulinate from L-glutamyl-tRNA(Glu): step 2/2. The protein is Glutamate-1-semialdehyde 2,1-aminomutase of Shigella boydii serotype 4 (strain Sb227).